Reading from the N-terminus, the 174-residue chain is NADH-ubiquinone oxidoreductase chain 6 (174 aa).

Transmembrane regions (helical) follow at residues 25 to 45 (SMGL…SIYV), 48 to 68 (FWFS…LFIY), 82 to 102 (FSLT…FFMI), and 143 to 163 (LITL…VKIT).

Belongs to the complex I subunit 6 family.

It localises to the mitochondrion membrane. It catalyses the reaction a ubiquinone + NADH + 5 H(+)(in) = a ubiquinol + NAD(+) + 4 H(+)(out). Its function is as follows. Core subunit of the mitochondrial membrane respiratory chain NADH dehydrogenase (Complex I) that is believed to belong to the minimal assembly required for catalysis. Complex I functions in the transfer of electrons from NADH to the respiratory chain. The immediate electron acceptor for the enzyme is believed to be ubiquinone. This Anopheles albimanus (New world malaria mosquito) protein is NADH-ubiquinone oxidoreductase chain 6 (ND6).